The chain runs to 1151 residues: ATP-dependent helicase/deoxyribonuclease subunit B (1151 aa).

A UvrD-like helicase ATP-binding domain is found at 1-273; it reads MALRLVLGRA…LALAAGVRVE (273 aa). Residue 8–15 participates in ATP binding; sequence GRAGSGKT. The 297-residue stretch at 282 to 578 folds into the UvrD-like helicase C-terminal domain; that stretch reads PPRFREAPAL…KLRLIPPALD (297 aa). [4Fe-4S] cluster is bound by residues Cys-788, Cys-1107, Cys-1110, and Cys-1116.

Belongs to the helicase family. AddB/RexB type 1 subfamily. As to quaternary structure, heterodimer of AddA and AddB. Mg(2+) serves as cofactor. [4Fe-4S] cluster is required as a cofactor.

The heterodimer acts as both an ATP-dependent DNA helicase and an ATP-dependent, dual-direction single-stranded exonuclease. Recognizes the chi site generating a DNA molecule suitable for the initiation of homologous recombination. The AddB subunit has 5' -&gt; 3' nuclease activity but not helicase activity. This is ATP-dependent helicase/deoxyribonuclease subunit B from Moorella thermoacetica (strain ATCC 39073 / JCM 9320).